A 453-amino-acid polypeptide reads, in one-letter code: tRNA modification GTPase MnmE (453 aa).

3 residues coordinate (6S)-5-formyl-5,6,7,8-tetrahydrofolate: R23, E80, and K120. One can recognise a TrmE-type G domain in the interval 216–375; the sequence is GSKIVIIGKP…LIKYLKDLNC (160 aa). N226 is a binding site for K(+). Residues 226–231, 245–251, and 270–273 each bind GTP; these read NSGKSS, TSIEGTT, and DTAG. S230 provides a ligand contact to Mg(2+). Positions 245, 247, and 250 each coordinate K(+). Residue T251 coordinates Mg(2+). Residue K453 participates in (6S)-5-formyl-5,6,7,8-tetrahydrofolate binding.

Belongs to the TRAFAC class TrmE-Era-EngA-EngB-Septin-like GTPase superfamily. TrmE GTPase family. As to quaternary structure, homodimer. Heterotetramer of two MnmE and two MnmG subunits. K(+) is required as a cofactor.

It is found in the cytoplasm. Functionally, exhibits a very high intrinsic GTPase hydrolysis rate. Involved in the addition of a carboxymethylaminomethyl (cmnm) group at the wobble position (U34) of certain tRNAs, forming tRNA-cmnm(5)s(2)U34. The sequence is that of tRNA modification GTPase MnmE from Wigglesworthia glossinidia brevipalpis.